The chain runs to 620 residues: Phosphopentomutase (620 aa).

2 residues coordinate alpha-D-glucose 1,6-bisphosphate: R71 and S173. Residue S173 is the Phosphoserine intermediate of the active site. Residues S173, D330, D332, and D334 each coordinate Mg(2+). S173 bears the Phosphoserine mark. D334, R335, T408, E432, and K446 together coordinate alpha-D-glucose 1,6-bisphosphate.

The protein belongs to the phosphohexose mutase family. Monomer. Requires Mg(2+) as cofactor. As to expression, highly expressed in lung, spleen and thymus. Expressed at lower levels in liver, brain, kidney, skeletal muscle, testis and heart.

It localises to the cytoplasm. It is found in the cytosol. The catalysed reaction is alpha-D-ribose 1-phosphate = D-ribose 5-phosphate. It catalyses the reaction 2-deoxy-alpha-D-ribose 1-phosphate = 2-deoxy-D-ribose 5-phosphate. The enzyme catalyses alpha-D-glucose 1-phosphate = alpha-D-glucose 6-phosphate. It carries out the reaction O-phospho-L-seryl-[protein] + alpha-D-glucose 1-phosphate = alpha-D-glucose 1,6-bisphosphate + L-seryl-[protein]. The catalysed reaction is alpha-D-glucose 1,6-bisphosphate + L-seryl-[protein] = O-phospho-L-seryl-[protein] + alpha-D-glucose 6-phosphate. Catalyzes the conversion of the nucleoside breakdown products ribose-1-phosphate and deoxyribose-1-phosphate to the corresponding 5-phosphopentoses. Catalyzes the reversible isomerization of alpha-D-glucose 1-phosphate to alpha-D-glucose 6-phosphate but with a lower catalytic efficiency. The mechanism proceeds via the intermediate compound alpha-D-glucose 1,6-bisphosphate. In vitro, also has a low glucose 1,6-bisphosphate synthase activity which is most probably not physiologically relevant. The sequence is that of Phosphopentomutase from Mus musculus (Mouse).